A 359-amino-acid chain; its full sequence is Mandelate racemase (359 aa).

Lys166 serves as the catalytic Proton acceptor; specific for S-mandelate. Mg(2+) is bound by residues Asp195, Glu221, and Glu247. His297 acts as the Proton acceptor; specific for R-mandelate in catalysis. Glu317 contributes to the substrate binding site.

The protein belongs to the mandelate racemase/muconate lactonizing enzyme family. As to quaternary structure, homooctamer. Mg(2+) serves as cofactor.

It catalyses the reaction (S)-mandelate = (R)-mandelate. It participates in aromatic compound metabolism; (R)-mandelate degradation; benzoate from (R)-mandelate: step 1/4. In Pseudomonas putida (Arthrobacter siderocapsulatus), this protein is Mandelate racemase (mdlA).